The chain runs to 306 residues: Pantothenate kinase (306 aa).

91–98 lines the ATP pocket; that stretch reads GSVAVGKS.

It belongs to the prokaryotic pantothenate kinase family.

The protein resides in the cytoplasm. The catalysed reaction is (R)-pantothenate + ATP = (R)-4'-phosphopantothenate + ADP + H(+). The protein operates within cofactor biosynthesis; coenzyme A biosynthesis; CoA from (R)-pantothenate: step 1/5. The protein is Pantothenate kinase (coaA) of Streptococcus pyogenes serotype M1.